A 483-amino-acid polypeptide reads, in one-letter code: Aspartyl/glutamyl-tRNA(Asn/Gln) amidotransferase subunit B (483 aa).

The protein belongs to the GatB/GatE family. GatB subfamily. As to quaternary structure, heterotrimer of A, B and C subunits.

The enzyme catalyses L-glutamyl-tRNA(Gln) + L-glutamine + ATP + H2O = L-glutaminyl-tRNA(Gln) + L-glutamate + ADP + phosphate + H(+). The catalysed reaction is L-aspartyl-tRNA(Asn) + L-glutamine + ATP + H2O = L-asparaginyl-tRNA(Asn) + L-glutamate + ADP + phosphate + 2 H(+). Its function is as follows. Allows the formation of correctly charged Asn-tRNA(Asn) or Gln-tRNA(Gln) through the transamidation of misacylated Asp-tRNA(Asn) or Glu-tRNA(Gln) in organisms which lack either or both of asparaginyl-tRNA or glutaminyl-tRNA synthetases. The reaction takes place in the presence of glutamine and ATP through an activated phospho-Asp-tRNA(Asn) or phospho-Glu-tRNA(Gln). This chain is Aspartyl/glutamyl-tRNA(Asn/Gln) amidotransferase subunit B, found in Rickettsia felis (strain ATCC VR-1525 / URRWXCal2) (Rickettsia azadi).